Consider the following 235-residue polypeptide: Purine nucleoside phosphorylase DeoD-type (235 aa).

His-4 contributes to the a purine D-ribonucleoside binding site. Phosphate contacts are provided by residues Gly-20, Arg-24, Arg-43, and 87–90 (RVGT). A purine D-ribonucleoside-binding positions include Glu-162, 179-181 (EME), and 203-204 (SD). Asp-204 serves as the catalytic Proton donor.

This sequence belongs to the PNP/UDP phosphorylase family. Homohexamer; trimer of homodimers.

It carries out the reaction a purine D-ribonucleoside + phosphate = a purine nucleobase + alpha-D-ribose 1-phosphate. The catalysed reaction is a purine 2'-deoxy-D-ribonucleoside + phosphate = a purine nucleobase + 2-deoxy-alpha-D-ribose 1-phosphate. Its function is as follows. Catalyzes the reversible phosphorolytic breakdown of the N-glycosidic bond in the beta-(deoxy)ribonucleoside molecules, with the formation of the corresponding free purine bases and pentose-1-phosphate. The sequence is that of Purine nucleoside phosphorylase DeoD-type from Bacillus cereus (strain ATCC 14579 / DSM 31 / CCUG 7414 / JCM 2152 / NBRC 15305 / NCIMB 9373 / NCTC 2599 / NRRL B-3711).